Reading from the N-terminus, the 136-residue chain is Ribosome-binding factor A (136 aa).

Positions 114 to 136 are disordered; it reads DRANRPGPAADEPDEPDEPEDRR. A compositionally biased stretch (acidic residues) spans 124-136; that stretch reads DEPDEPDEPEDRR.

This sequence belongs to the RbfA family. Monomer. Binds 30S ribosomal subunits, but not 50S ribosomal subunits or 70S ribosomes.

The protein localises to the cytoplasm. Its function is as follows. One of several proteins that assist in the late maturation steps of the functional core of the 30S ribosomal subunit. Associates with free 30S ribosomal subunits (but not with 30S subunits that are part of 70S ribosomes or polysomes). Required for efficient processing of 16S rRNA. May interact with the 5'-terminal helix region of 16S rRNA. The chain is Ribosome-binding factor A from Bordetella petrii (strain ATCC BAA-461 / DSM 12804 / CCUG 43448).